Here is an 849-residue protein sequence, read N- to C-terminus: Aminopeptidase N (849 aa).

Substrate contacts are provided by residues Glu-122 and 259–263 (GAMEN). His-294 serves as a coordination point for Zn(2+). Residue Glu-295 is the Proton acceptor of the active site. Positions 298 and 317 each coordinate Zn(2+).

The protein belongs to the peptidase M1 family. Monomer. It depends on Zn(2+) as a cofactor.

It localises to the cytoplasm. The catalysed reaction is Release of an N-terminal amino acid, Xaa-|-Yaa- from a peptide, amide or arylamide. Xaa is preferably Ala, but may be most amino acids including Pro (slow action). When a terminal hydrophobic residue is followed by a prolyl residue, the two may be released as an intact Xaa-Pro dipeptide.. Functionally, aminopeptidase with broad substrate specificity to several peptides. It has more affinity for oligopeptides than for dipeptides. It plays an essential role in the metabolism, it may be involved in nitrogen supply or protein turnover. The sequence is that of Aminopeptidase N (pepN) from Lactococcus lactis subsp. lactis (Streptococcus lactis).